The following is a 130-amino-acid chain: L-ectoine synthase (130 aa).

It belongs to the ectoine synthase family.

The enzyme catalyses (2S)-4-acetamido-2-aminobutanoate = L-ectoine + H2O. It participates in amine and polyamine biosynthesis; ectoine biosynthesis; L-ectoine from L-aspartate 4-semialdehyde: step 3/3. In terms of biological role, catalyzes the circularization of gamma-N-acetyl-alpha,gamma-diaminobutyric acid (ADABA) to ectoine (1,4,5,6-tetrahydro-2-methyl-4-pyrimidine carboxylic acid), which is an excellent osmoprotectant. The sequence is that of L-ectoine synthase from Desulfatibacillum aliphaticivorans.